We begin with the raw amino-acid sequence, 387 residues long: Formate-dependent phosphoribosylglycinamide formyltransferase (387 aa).

N(1)-(5-phospho-beta-D-ribosyl)glycinamide contacts are provided by residues 12-13 (EL) and E72. ATP-binding positions include R104, K145, 150–155 (SSGKGQ), 185–188 (EEFI), and E193. One can recognise an ATP-grasp domain in the interval 109–300 (DLAAKDLKLL…EFELHIRAIL (192 aa)). Mg(2+) is bound by residues E258 and E270. N(1)-(5-phospho-beta-D-ribosyl)glycinamide-binding positions include D277, K348, and 355–356 (RR).

It belongs to the PurK/PurT family. In terms of assembly, homodimer.

It catalyses the reaction N(1)-(5-phospho-beta-D-ribosyl)glycinamide + formate + ATP = N(2)-formyl-N(1)-(5-phospho-beta-D-ribosyl)glycinamide + ADP + phosphate + H(+). It participates in purine metabolism; IMP biosynthesis via de novo pathway; N(2)-formyl-N(1)-(5-phospho-D-ribosyl)glycinamide from N(1)-(5-phospho-D-ribosyl)glycinamide (formate route): step 1/1. In terms of biological role, involved in the de novo purine biosynthesis. Catalyzes the transfer of formate to 5-phospho-ribosyl-glycinamide (GAR), producing 5-phospho-ribosyl-N-formylglycinamide (FGAR). Formate is provided by PurU via hydrolysis of 10-formyl-tetrahydrofolate. The protein is Formate-dependent phosphoribosylglycinamide formyltransferase of Leptospira borgpetersenii serovar Hardjo-bovis (strain JB197).